Reading from the N-terminus, the 186-residue chain is Tegument protein UL55 (186 aa).

Belongs to the alphaherpesvirinae HHV-1 UL55 family.

It localises to the virion tegument. It is found in the host nucleus matrix. This chain is Tegument protein UL55, found in Human herpesvirus 2 (strain HG52) (HHV-2).